Here is a 290-residue protein sequence, read N- to C-terminus: Pyridoxal 5'-phosphate synthase subunit PdxS (290 aa).

Residue D22 coordinates D-ribose 5-phosphate. The Schiff-base intermediate with D-ribose 5-phosphate role is filled by K79. G151 contacts D-ribose 5-phosphate. R163 is a binding site for D-glyceraldehyde 3-phosphate. Residues G212 and 233–234 (GS) each bind D-ribose 5-phosphate.

This sequence belongs to the PdxS/SNZ family. As to quaternary structure, in the presence of PdxT, forms a dodecamer of heterodimers.

It catalyses the reaction aldehydo-D-ribose 5-phosphate + D-glyceraldehyde 3-phosphate + L-glutamine = pyridoxal 5'-phosphate + L-glutamate + phosphate + 3 H2O + H(+). The protein operates within cofactor biosynthesis; pyridoxal 5'-phosphate biosynthesis. Its function is as follows. Catalyzes the formation of pyridoxal 5'-phosphate from ribose 5-phosphate (RBP), glyceraldehyde 3-phosphate (G3P) and ammonia. The ammonia is provided by the PdxT subunit. Can also use ribulose 5-phosphate and dihydroxyacetone phosphate as substrates, resulting from enzyme-catalyzed isomerization of RBP and G3P, respectively. This is Pyridoxal 5'-phosphate synthase subunit PdxS from Clostridium botulinum (strain Langeland / NCTC 10281 / Type F).